The sequence spans 166 residues: Large ribosomal subunit protein uL10 (166 aa).

The protein belongs to the universal ribosomal protein uL10 family. As to quaternary structure, part of the ribosomal stalk of the 50S ribosomal subunit. The N-terminus interacts with L11 and the large rRNA to form the base of the stalk. The C-terminus forms an elongated spine to which L12 dimers bind in a sequential fashion forming a multimeric L10(L12)X complex.

Its function is as follows. Forms part of the ribosomal stalk, playing a central role in the interaction of the ribosome with GTP-bound translation factors. The chain is Large ribosomal subunit protein uL10 from Pseudomonas syringae pv. syringae (strain B728a).